Here is a 912-residue protein sequence, read N- to C-terminus: Phosphoenolpyruvate carboxylase (912 aa).

Residues H138 and K575 contribute to the active site.

Belongs to the PEPCase type 1 family. It depends on Mg(2+) as a cofactor.

It catalyses the reaction oxaloacetate + phosphate = phosphoenolpyruvate + hydrogencarbonate. Forms oxaloacetate, a four-carbon dicarboxylic acid source for the tricarboxylic acid cycle. In Lactobacillus acidophilus (strain ATCC 700396 / NCK56 / N2 / NCFM), this protein is Phosphoenolpyruvate carboxylase.